Reading from the N-terminus, the 243-residue chain is Uridylate kinase (243 aa).

Residue 15 to 18 (KLSG) participates in ATP binding. The segment at 23–28 (GEEGFG) is involved in allosteric activation by GTP. Residue glycine 57 coordinates UMP. 2 residues coordinate ATP: glycine 58 and arginine 62. UMP contacts are provided by residues aspartate 77 and 138–145 (TGNPFFTT). Threonine 165, phenylalanine 171, and aspartate 174 together coordinate ATP.

This sequence belongs to the UMP kinase family. Homohexamer.

The protein resides in the cytoplasm. It catalyses the reaction UMP + ATP = UDP + ADP. It participates in pyrimidine metabolism; CTP biosynthesis via de novo pathway; UDP from UMP (UMPK route): step 1/1. Its activity is regulated as follows. Allosterically activated by GTP. Inhibited by UTP. Functionally, catalyzes the reversible phosphorylation of UMP to UDP. This is Uridylate kinase from Aliivibrio fischeri (strain ATCC 700601 / ES114) (Vibrio fischeri).